We begin with the raw amino-acid sequence, 237 residues long: Glutathione-independent glyoxalase HSP31 (237 aa).

Residues Cys-138, His-139, and Glu-170 contribute to the active site. Cys-138 bears the Cysteine sulfinic acid (-SO2H) mark.

It belongs to the peptidase C56 family. HSP31-like subfamily. Homodimer. In terms of processing, cys-138 is easily oxidized to sulfinic acid.

It is found in the cytoplasm. The protein resides in the P-body. It catalyses the reaction methylglyoxal + H2O = (R)-lactate + H(+). Catalyzes the conversion of methylglyoxal (MG) to D-lactate in a single glutathione (GSH)-independent step. May play a role in detoxifying endogenously produced glyoxals. Involved in protection against reactive oxygen species (ROS). Important for viability in stationary phase. May negatively regulate TORC1 in response to nutrient limitation. The polypeptide is Glutathione-independent glyoxalase HSP31 (Saccharomyces cerevisiae (strain ATCC 204508 / S288c) (Baker's yeast)).